A 363-amino-acid polypeptide reads, in one-letter code: Phosphoserine aminotransferase (363 aa).

Residue R42 coordinates L-glutamate. Pyridoxal 5'-phosphate is bound by residues 76–77 (GR), W102, T156, D175, and Q198. Residue K199 is modified to N6-(pyridoxal phosphate)lysine. 240–241 (NT) provides a ligand contact to pyridoxal 5'-phosphate.

This sequence belongs to the class-V pyridoxal-phosphate-dependent aminotransferase family. SerC subfamily. In terms of assembly, homodimer. Pyridoxal 5'-phosphate serves as cofactor.

Its subcellular location is the cytoplasm. It carries out the reaction O-phospho-L-serine + 2-oxoglutarate = 3-phosphooxypyruvate + L-glutamate. It catalyses the reaction 4-(phosphooxy)-L-threonine + 2-oxoglutarate = (R)-3-hydroxy-2-oxo-4-phosphooxybutanoate + L-glutamate. The protein operates within amino-acid biosynthesis; L-serine biosynthesis; L-serine from 3-phospho-D-glycerate: step 2/3. It functions in the pathway cofactor biosynthesis; pyridoxine 5'-phosphate biosynthesis; pyridoxine 5'-phosphate from D-erythrose 4-phosphate: step 3/5. Functionally, catalyzes the reversible conversion of 3-phosphohydroxypyruvate to phosphoserine and of 3-hydroxy-2-oxo-4-phosphonooxybutanoate to phosphohydroxythreonine. In Shewanella baltica (strain OS155 / ATCC BAA-1091), this protein is Phosphoserine aminotransferase.